An 835-amino-acid chain; its full sequence is U-box domain-containing protein 35 (835 aa).

Disordered stretches follow at residues 1-22, 177-303, and 410-457; these read MSRS…SRTV, VRPS…SSNR, and EKEK…LEGT. Positions 10-19 are enriched in pro residues; it reads LPPPPPPPPS. Positions 195–218 are enriched in low complexity; it reads RTNSSSGSSGPTSDSSDVMSSAHD. A compositionally biased stretch (polar residues) spans 269 to 282; sequence SSINRSSTDTTSRW. Basic and acidic residues-rich tracts occupy residues 285–295 and 410–455; these read RRRDYEERKEA and EKEK…EKLE. Residues 340 to 459 are a coiled coil; it reads QSYTDNQVNL…EKEKLEGTLG (120 aa). The Protein kinase domain occupies 480–745; it reads FSEELKIGMG…DLKDQILPAL (266 aa). Residues 486 to 494 and Lys-507 each bind ATP; that span reads IGMGAYGAV. Asp-602 functions as the Proton acceptor in the catalytic mechanism. The region spanning 765–835 is the U-box domain; it reads QPPTHFICPL…TAIMEWRSTR (71 aa).

It belongs to the protein kinase superfamily. Ser/Thr protein kinase family.

The enzyme catalyses L-seryl-[protein] + ATP = O-phospho-L-seryl-[protein] + ADP + H(+). It carries out the reaction L-threonyl-[protein] + ATP = O-phospho-L-threonyl-[protein] + ADP + H(+). The catalysed reaction is S-ubiquitinyl-[E2 ubiquitin-conjugating enzyme]-L-cysteine + [acceptor protein]-L-lysine = [E2 ubiquitin-conjugating enzyme]-L-cysteine + N(6)-ubiquitinyl-[acceptor protein]-L-lysine.. The protein operates within protein modification; protein ubiquitination. Its function is as follows. Functions as an E3 ubiquitin ligase. The sequence is that of U-box domain-containing protein 35 (PUB35) from Arabidopsis thaliana (Mouse-ear cress).